The primary structure comprises 120 residues: Ribosomal protein eL22-like 1 (120 aa).

The protein belongs to the eukaryotic ribosomal protein eL22 family.

The chain is Ribosomal protein eL22-like 1 (rpl22l1) from Xenopus tropicalis (Western clawed frog).